The primary structure comprises 71 residues: Paralithocin 2 (71 aa).

An N-terminal signal peptide occupies residues 1–23 (MGAAKVLLVVLAVMVAVPNLAEG). Disulfide bonds link Cys-29/Cys-58, Cys-34/Cys-54, Cys-39/Cys-52, and Cys-44/Cys-55. Arg-70 is subject to Arginine amide; partial.

This sequence belongs to the paralithocin family. Post-translationally, the amidated form is probably the active form.

Functionally, has antibacterial activity, mainly against marine Gram-positive bacteria like C.maltaromaticum (MIC=50 uM), C.mobile (MIC=50 uM), C.divergens (MIC=50 uM) and C.funditum (MIC=25 uM) but also against C.glutamicum (MIC=12.5 uM). Has very little or no activity against Gram-negative bacteria. The sequence is that of Paralithocin 2 from Paralithodes camtschaticus (Red king crab).